Here is a 193-residue protein sequence, read N- to C-terminus: Small ribosomal subunit protein eS7 (193 aa).

This sequence belongs to the eukaryotic ribosomal protein eS7 family.

This Dictyostelium discoideum (Social amoeba) protein is Small ribosomal subunit protein eS7 (rps7).